The primary structure comprises 361 residues: Deoxyhypusine hydroxylase (361 aa).

4 HEAT-like PBS-type repeats span residues 59-85 (LKHE…VLEN), 94-120 (VRHE…YMQD), 183-211 (QRYR…GFRD), and 216-242 (FRHE…RLRD). The Fe cation site is built by His-61, Glu-62, His-96, and Glu-97. Residues His-218, Glu-219, His-251, and Glu-252 each coordinate Fe cation.

The protein belongs to the deoxyhypusine hydroxylase family. Fe(2+) is required as a cofactor.

It is found in the cytoplasm. The protein resides in the nucleus. It carries out the reaction [eIF5A protein]-deoxyhypusine + AH2 + O2 = [eIF5A protein]-hypusine + A + H2O. Its pathway is protein modification; eIF5A hypusination. Its function is as follows. Catalyzes the hydroxylation of the N(6)-(4-aminobutyl)-L-lysine intermediate to form hypusine, an essential post-translational modification only found in mature eIF-5A factor. In Cryptococcus neoformans var. neoformans serotype D (strain JEC21 / ATCC MYA-565) (Filobasidiella neoformans), this protein is Deoxyhypusine hydroxylase.